We begin with the raw amino-acid sequence, 397 residues long: Tryptophan synthase beta chain (397 aa).

Residue K88 is modified to N6-(pyridoxal phosphate)lysine.

The protein belongs to the TrpB family. In terms of assembly, tetramer of two alpha and two beta chains. Requires pyridoxal 5'-phosphate as cofactor.

The enzyme catalyses (1S,2R)-1-C-(indol-3-yl)glycerol 3-phosphate + L-serine = D-glyceraldehyde 3-phosphate + L-tryptophan + H2O. It participates in amino-acid biosynthesis; L-tryptophan biosynthesis; L-tryptophan from chorismate: step 5/5. Functionally, the beta subunit is responsible for the synthesis of L-tryptophan from indole and L-serine. This chain is Tryptophan synthase beta chain (trpB), found in Haemophilus influenzae (strain ATCC 51907 / DSM 11121 / KW20 / Rd).